The primary structure comprises 1448 residues: Murinoglobulin-2 (1448 aa).

Positions 1–24 (MWKNREAQLCLFSVLLAFLPSASL) are cleaved as a signal peptide. Disulfide bonds link cysteine 48/cysteine 86, cysteine 245/cysteine 277, and cysteine 263/cysteine 289. A glycan (N-linked (GlcNAc...) asparagine) is linked at asparagine 55. N-linked (GlcNAc...) asparagine glycans are attached at residues asparagine 295, asparagine 315, asparagine 387, and asparagine 502. Cystine bridges form between cysteine 462–cysteine 556, cysteine 588–cysteine 748, and cysteine 636–cysteine 681. The interval 678-709 (PTYCYDLPKEPPRKDPPRKDPEPKDTVVETIR) is bait region. N-linked (GlcNAc...) asparagine glycosylation is found at asparagine 751 and asparagine 846. Intrachain disulfides connect cysteine 824–cysteine 860, cysteine 898–cysteine 1295, cysteine 1056–cysteine 1101, and cysteine 1326–cysteine 1441. The segment at residues 949–952 (CGEQ) is a cross-link (isoglutamyl cysteine thioester (Cys-Gln)). Residue asparagine 968 is glycosylated (N-linked (GlcNAc...) asparagine). Residues asparagine 1114, asparagine 1285, and asparagine 1398 are each glycosylated (N-linked (GlcNAc...) asparagine).

Belongs to the protease inhibitor I39 (alpha-2-macroglobulin) family. In terms of assembly, monomer.

The protein localises to the secreted. In terms of biological role, a proteinase activates the inhibitor by specific proteolysis in the bait region, which, by an unknown mechanism leads to reaction at the cysteinyl-glutamyl internal thiol ester site and to a conformational change, whereby the proteinase is trapped and/or covalently bound to the inhibitor. While in the tetrameric proteinase inhibitors steric inhibition is sufficiently strong, monomeric forms need a covalent linkage between the activated glutamyl residue of the original thiol ester and a terminal amino group of a lysine or another nucleophilic group on the proteinase, for inhibition to be effective. The protein is Murinoglobulin-2 of Rattus norvegicus (Rat).